The primary structure comprises 400 residues: Melanization protease 1 (400 aa).

The signal sequence occupies residues 1–22; the sequence is MEPHFFFTVLWMLLMGTSSTYA. Positions 23-137 are cleaved as a propeptide — activation peptide; the sequence is QEIFGYCRTP…PNCGENFGDR (115 aa). One can recognise a Clip domain in the interval 28-91; the sequence is YCRTPDENSG…FCFTNVQICC (64 aa). Intrachain disulfides connect Cys-29–Cys-90, Cys-39–Cys-70, and Cys-45–Cys-91. Residues 98–120 are disordered; the sequence is NQQPQWGNHPQPTQTTKPTKRSG. Cystine bridges form between Cys-130-Cys-268, Cys-168-Cys-184, and Cys-210-Cys-220. A Peptidase S1 domain is found at 138–399; that stretch reads VVGGNETTKR…YLNWIENNVR (262 aa). Asn-142 is a glycosylation site (N-linked (GlcNAc...) asparagine). His-183 acts as the Charge relay system in catalysis. Residues Glu-201, Asp-203, Thr-206, and Asp-209 each contribute to the Ca(2+) site. Catalysis depends on Asp-248, which acts as the Charge relay system. An N-linked (GlcNAc...) asparagine glycan is attached at Asn-296. Disulfide bonds link Cys-315–Cys-332 and Cys-342–Cys-375. Catalysis depends on Ser-346, which acts as the Charge relay system.

Belongs to the peptidase S1 family. CLIP subfamily.

Its function is as follows. Serine protease which plays an essential role in the melanization immune response by acting downstream of sp7 to activate prophenoloxidase (PPO1). May function in diverse Hayan-dependent PPO1-activating cascades that are negatively controlled by different serpin proteins; Spn27A in the hemolymph and Spn77BA in the trachea. Regulation of melanization and PPO1 activation appears to be largely independent of the Toll signaling pathway. The sequence is that of Melanization protease 1 from Drosophila melanogaster (Fruit fly).